A 1193-amino-acid polypeptide reads, in one-letter code: Major DNA-binding protein (1193 aa).

A Required for filament formation motif is present at residues 827–828 (FW). The segment at 1125 to 1145 (AGGGPAGSAGGPESGGGAGAA) is disordered. The interval 1170-1193 (PTAAALDGGGDGDECAFPAKRLRL) is required for nuclear localization.

The protein belongs to the herpesviridae major DNA-binding protein family. Homooligomers. Forms double-helical filaments necessary for the formation of replication compartments within the host nucleus. Interacts with the origin-binding protein. Interacts with the helicase primase complex; this interaction stimulates primer synthesis activity of the helicase-primase complex. Interacts with the DNA polymerase. Interacts with the alkaline exonuclease; this interaction increases its nuclease processivity.

The protein localises to the host nucleus. In terms of biological role, plays several crucial roles in viral infection. Participates in the opening of the viral DNA origin to initiate replication by interacting with the origin-binding protein. May disrupt loops, hairpins and other secondary structures present on ssDNA to reduce and eliminate pausing of viral DNA polymerase at specific sites during elongation. Promotes viral DNA recombination by performing strand-transfer, characterized by the ability to transfer a DNA strand from a linear duplex to a complementary single-stranded DNA circle. Can also catalyze the renaturation of complementary single strands. Additionally, reorganizes the host cell nucleus, leading to the formation of prereplicative sites and replication compartments. This process is driven by the protein which can form double-helical filaments in the absence of DNA. The polypeptide is Major DNA-binding protein (Tupaiid herpesvirus (strain 2) (TuHV-2)).